We begin with the raw amino-acid sequence, 2134 residues long: Genome polyprotein (2134 aa).

The Cytoplasmic portion of the chain corresponds to M1–K1377. Residues I781–K882 form the LRAT domain. Active-site residues include H791 and H802. Catalysis depends on C863, which acts as the Acyl-thioester intermediate. Positions L1127–D1289 constitute an SF3 helicase domain. G1153–S1160 provides a ligand contact to ATP. Residues W1378 to V1392 lie within the membrane without spanning it. Topologically, residues L1393–F2134 are cytoplasmic. Position 1415 is an O-(5'-phospho-RNA)-tyrosine (Y1415). One can recognise a Peptidase C3 domain in the interval D1431 to L1643. Catalysis depends on for protease 3C activity residues H1477, D1515, and C1603. In terms of domain architecture, RdRp catalytic spans D1880 to K2001.

Belongs to the picornaviridae polyprotein family. In terms of processing, specific enzymatic cleavages by the viral protease in vivo yield a variety of precursors and mature proteins. During virion maturation, non-infectious particles are rendered infectious following cleavage of VP0. This maturation cleavage is followed by a conformational change of the particle. Post-translationally, VPg is uridylylated by the polymerase and is covalently linked to the 5'-end of genomic RNA. This uridylylated form acts as a nucleotide-peptide primer for the polymerase.

The protein localises to the virion. The protein resides in the host cytoplasm. It is found in the host cytoplasmic vesicle membrane. The enzyme catalyses RNA(n) + a ribonucleoside 5'-triphosphate = RNA(n+1) + diphosphate. The catalysed reaction is a ribonucleoside 5'-triphosphate + H2O = a ribonucleoside 5'-diphosphate + phosphate + H(+). It carries out the reaction Selective cleavage of Gln-|-Gly bond in the poliovirus polyprotein. In other picornavirus reactions Glu may be substituted for Gln, and Ser or Thr for Gly.. In terms of biological role, capsid proteins VP1, VP2, and VP3 form a closed capsid enclosing the viral positive strand RNA genome. All these proteins contain a beta-sheet structure called beta-barrel jelly roll. Together they form an icosahedral capsid (T=3) composed of 60 copies of each VP1, VP2, and VP3, with a diameter of approximately 300 Angstroms. VP1 is situated at the 12 fivefold axes, whereas VP2 and VP3 are located at the quasi-sixfold axes. Its function is as follows. VP0 precursor is a component of immature procapsids. The N-terminal domain of VP0, protein VP4, is needed for the assembly of 12 pentamers into the icosahedral structure. Unlike other picornaviruses, AEV VP4 may not be myristoylated. Functionally, protein 2B and 2BC precursor affect membrane integrity and cause an increase in membrane permeability. Associates with and induces structural rearrangements of intracellular membranes. It displays RNA-binding, nucleotide binding and NTPase activities. In terms of biological role, protein 3A, via its hydrophobic domain, serves as membrane anchor. Its function is as follows. Protein 3B is covalently linked to the 5'-end of both the positive-strand and negative-strand genomic RNAs. It acts as a genome-linked replication primer. Functionally, cysteine protease that generates mature viral proteins from the precursor polyprotein. In addition to its proteolytic activity, it binds to viral RNA, and thus influences viral genome replication. RNA and substrate bind cooperatively to the protease. RNA-directed RNA polymerase 3D-POL replicates genomic and antigenomic RNA by recognizing replications specific signals. The polypeptide is Genome polyprotein (Avian encephalomyelitis virus (strain Calnek vaccine) (AEV)).